The primary structure comprises 129 residues: Cytochrome c-type protein SHP (129 aa).

The N-terminal stretch at 1 to 17 is a signal peptide; the sequence is MTRFLILSAVLAGPALA. Heme c contacts are provided by Cys-60, Cys-63, and His-64. A disulfide bridge connects residues Cys-106 and Cys-114.

In terms of processing, binds 1 heme c group covalently per subunit.

Functionally, high-spin cytochrome. Transiently bind oxygen during autoxidation, which occurs with a half-life of 3 minutes with a 4-fold excess of O(2). Also binds carbon monoxide, azide and cyanide. This chain is Cytochrome c-type protein SHP (shp), found in Cereibacter sphaeroides (strain ATCC 17023 / DSM 158 / JCM 6121 / CCUG 31486 / LMG 2827 / NBRC 12203 / NCIMB 8253 / ATH 2.4.1.) (Rhodobacter sphaeroides).